We begin with the raw amino-acid sequence, 331 residues long: Glyoxylate reductase (331 aa).

NADP(+) is bound by residues 158–161 (FGRI), 180–182 (SRT), and 239–241 (TSR). Catalysis depends on residues arginine 241 and glutamate 270. Catalysis depends on histidine 288, which acts as the Proton donor. Residue 288-290 (HIG) coordinates NADP(+).

Belongs to the D-isomer specific 2-hydroxyacid dehydrogenase family. GyaR subfamily. Homodimer.

It localises to the cytoplasm. The enzyme catalyses glycolate + NAD(+) = glyoxylate + NADH + H(+). The polypeptide is Glyoxylate reductase (Thermococcus litoralis (strain ATCC 51850 / DSM 5473 / JCM 8560 / NS-C)).